The following is a 301-amino-acid chain: Mitochondrial ornithine transporter 1 (301 aa).

Helical transmembrane passes span 5–25 (PAIQAAIDLTAGAAGGTACVL), 68–88 (SPALIANIAENSVLFMCYGFC), 110–130 (AAAGSFASAFAALVLCPTELV), 168–188 (GFYHGLSSTLLREVPGYFFFF), 207–227 (LGPIPLMLSGGFGGICLWLAV), and 237–257 (IQVLSMTGKQTGLIRTFLSIV). Solcar repeat units follow at residues 7-91 (IQAA…CQQV), 104-197 (LSDL…SRSF), and 207-293 (LGPI…SRKL).

It belongs to the mitochondrial carrier (TC 2.A.29) family. Expressed in the liver (at protein level).

Its subcellular location is the mitochondrion inner membrane. It is found in the mitochondrion membrane. The enzyme catalyses L-citrulline(in) + L-ornithine(out) + H(+)(in) = L-citrulline(out) + L-ornithine(in) + H(+)(out). It catalyses the reaction L-ornithine(in) + L-arginine(out) = L-ornithine(out) + L-arginine(in). It carries out the reaction L-ornithine(out) + L-lysine(in) = L-ornithine(in) + L-lysine(out). The catalysed reaction is L-ornithine(out) + H(+)(in) = L-ornithine(in) + H(+)(out). The enzyme catalyses L-lysine(out) + H(+)(in) = L-lysine(in) + H(+)(out). With respect to regulation, inhibited by pyridoxal 5'-phosphate as well as by mercurials (mersalyl, p-chloromercuribenzene sulfonate, and mercuric chloride), N-ethylmaleimide and spermine. Functionally, mitochondrial ornithine-citrulline antiporter. Catalyzes the exchange between cytosolic ornithine and mitochondrial citrulline plus an H(+), the proton compensates the positive charge of ornithine thus leading to an electroneutral transport. Plays a crucial role in the urea cycle, by connecting the cytosolic and the intramitochondrial reactions of the urea cycle. Lysine and arginine are also transported by the antiport mechanism. In addition, catalyzes an electroneutral exchange of ornithine or lysine for H(+), a reaction driven by the pH gradient across the inner membrane. This chain is Mitochondrial ornithine transporter 1 (Slc25a15), found in Rattus norvegicus (Rat).